The chain runs to 250 residues: Ribonucleotide monophosphatase NagD (250 aa).

Mg(2+) is bound by residues D9 and D11. D11 is an active-site residue. Residues D11, 42 to 43, and K176 each bind substrate; that span reads TN. Residue D201 participates in Mg(2+) binding. 202 to 205 is a binding site for substrate; sequence NLRT.

It belongs to the HAD-like hydrolase superfamily. NagD family. As to quaternary structure, monomer. Mg(2+) serves as cofactor. The cofactor is Mn(2+). Requires Co(2+) as cofactor. Zn(2+) is required as a cofactor.

It carries out the reaction a ribonucleoside 5'-phosphate + H2O = a ribonucleoside + phosphate. In terms of biological role, catalyzes the dephosphorylation of an unusually broad range of substrate including deoxyribo- and ribonucleoside tri-, di-, and monophosphates, as well as polyphosphate and glucose-1-P (Glu1P). This chain is Ribonucleotide monophosphatase NagD (nagD), found in Escherichia coli O157:H7.